Consider the following 329-residue polypeptide: GTP 3',8-cyclase (329 aa).

The 227-residue stretch at 8-234 (AFARKFYYLR…QLRQRSDGPA (227 aa)) folds into the Radical SAM core domain. Arg17 contributes to the GTP binding site. 2 residues coordinate [4Fe-4S] cluster: Cys24 and Cys28. Tyr30 is a binding site for S-adenosyl-L-methionine. Residue Cys31 participates in [4Fe-4S] cluster binding. Position 68 (Arg68) interacts with GTP. Gly72 is a binding site for S-adenosyl-L-methionine. Thr99 contacts GTP. Ser123 provides a ligand contact to S-adenosyl-L-methionine. A GTP-binding site is contributed by Lys160. Position 194 (Met194) interacts with S-adenosyl-L-methionine. The [4Fe-4S] cluster site is built by Cys257 and Cys260. Residue 262–264 (RLR) coordinates GTP. [4Fe-4S] cluster is bound at residue Cys274.

It belongs to the radical SAM superfamily. MoaA family. Monomer and homodimer. It depends on [4Fe-4S] cluster as a cofactor.

The catalysed reaction is GTP + AH2 + S-adenosyl-L-methionine = (8S)-3',8-cyclo-7,8-dihydroguanosine 5'-triphosphate + 5'-deoxyadenosine + L-methionine + A + H(+). The protein operates within cofactor biosynthesis; molybdopterin biosynthesis. Catalyzes the cyclization of GTP to (8S)-3',8-cyclo-7,8-dihydroguanosine 5'-triphosphate. The sequence is that of GTP 3',8-cyclase from Salmonella dublin (strain CT_02021853).